The sequence spans 228 residues: MESLQQLQQQLGLMAWPLFICSALTVMLLAERLFQVLLSLTVGKGAIRHALQATSPKNPKQLAELTEHFASKRPVLYRGVAMLLAHHQFDKSLREDAAGIWLQEQRHQFNSGLRLLTLIGVISPLLGLLGTVLGLIEMFKGVAATTGSITPNVLADGLGVAMYTTAAGLLIAVPAVAGAQLLSLWADRTMAKLEHTLNYVNLWLEGMTLHADASLTVVTPQEATTENL.

3 helical membrane passes run 11–31 (LGLM…LLAE), 116–136 (LTLI…LGLI), and 158–178 (LGVA…AVAG).

This sequence belongs to the ExbB/TolQ family. In terms of assembly, the accessory proteins ExbB and ExbD seem to form a complex with TonB.

The protein resides in the cell inner membrane. Involved in the TonB-dependent energy-dependent transport of various receptor-bound substrates. Protects ExbD from proteolytic degradation and functionally stabilizes TonB. The protein is Biopolymer transport protein exbB1 (exbB1) of Vibrio cholerae serotype O1 (strain ATCC 39315 / El Tor Inaba N16961).